The following is a 184-amino-acid chain: Photosystem I assembly protein Ycf4 (184 aa).

The next 2 membrane-spanning stretches (helical) occupy residues 21 to 43 (NFCW…ISSY) and 58 to 80 (LFFP…SSYL).

Belongs to the Ycf4 family.

Its subcellular location is the plastid. The protein resides in the chloroplast thylakoid membrane. Functionally, seems to be required for the assembly of the photosystem I complex. The sequence is that of Photosystem I assembly protein Ycf4 from Carpobrotus chilensis (Sea fig).